The primary structure comprises 180 residues: Ribulose bisphosphate carboxylase small subunit, chloroplastic (180 aa).

The transit peptide at 1 to 56 (MASSVLSSAAVATRSNVAQANMVAPFTGLKSAASFPVSRKQNLDITSIASNGGRVQ) directs the protein to the chloroplast.

The protein belongs to the RuBisCO small chain family. As to quaternary structure, heterohexadecamer of 8 large and 8 small subunits.

Its subcellular location is the plastid. The protein resides in the chloroplast. Its function is as follows. RuBisCO catalyzes two reactions: the carboxylation of D-ribulose 1,5-bisphosphate, the primary event in carbon dioxide fixation, as well as the oxidative fragmentation of the pentose substrate. Both reactions occur simultaneously and in competition at the same active site. Although the small subunit is not catalytic it is essential for maximal activity. This Nicotiana plumbaginifolia (Leadwort-leaved tobacco) protein is Ribulose bisphosphate carboxylase small subunit, chloroplastic.